Here is a 295-residue protein sequence, read N- to C-terminus: N-acetylmuramic acid 6-phosphate etherase (295 aa).

Residues 54 to 217 (VIASFRQGGR…STASMIGIGK (164 aa)) form the SIS domain. The Proton donor role is filled by E82. The active site involves E113.

The protein belongs to the GCKR-like family. MurNAc-6-P etherase subfamily. As to quaternary structure, homodimer.

It carries out the reaction N-acetyl-D-muramate 6-phosphate + H2O = N-acetyl-D-glucosamine 6-phosphate + (R)-lactate. The protein operates within amino-sugar metabolism; N-acetylmuramate degradation. Functionally, specifically catalyzes the cleavage of the D-lactyl ether substituent of MurNAc 6-phosphate, producing GlcNAc 6-phosphate and D-lactate. The polypeptide is N-acetylmuramic acid 6-phosphate etherase (Geobacillus sp. (strain WCH70)).